A 102-amino-acid polypeptide reads, in one-letter code: Small ribosomal subunit protein uS10 (102 aa).

This sequence belongs to the universal ribosomal protein uS10 family. Part of the 30S ribosomal subunit.

Its function is as follows. Involved in the binding of tRNA to the ribosomes. This chain is Small ribosomal subunit protein uS10, found in Methylobacterium nodulans (strain LMG 21967 / CNCM I-2342 / ORS 2060).